Reading from the N-terminus, the 490-residue chain is Cobyric acid synthase (490 aa).

One can recognise a GATase cobBQ-type domain in the interval Arg-252–Ala-439. Cys-333 acts as the Nucleophile in catalysis. His-431 is a catalytic residue.

Belongs to the CobB/CobQ family. CobQ subfamily.

It functions in the pathway cofactor biosynthesis; adenosylcobalamin biosynthesis. Catalyzes amidations at positions B, D, E, and G on adenosylcobyrinic A,C-diamide. NH(2) groups are provided by glutamine, and one molecule of ATP is hydrogenolyzed for each amidation. This chain is Cobyric acid synthase, found in Pseudomonas aeruginosa (strain ATCC 15692 / DSM 22644 / CIP 104116 / JCM 14847 / LMG 12228 / 1C / PRS 101 / PAO1).